The primary structure comprises 250 residues: Agamous-like MADS-box protein AGL8 homolog (250 aa).

Residues 3–57 (RGRVQLKRIENKINRQVTFSKRRSGLLKKAHEISVLCDAEVGLIVFSTKGKLFEY) enclose the MADS-box domain. Positions 88–178 (PGSWTLENAK…SKKVKEREKE (91 aa)) constitute a K-box domain. 2 disordered regions span residues 162 to 191 (QEQNNQLSKKVKEREKEVEQQNQWDQQNHE) and 206 to 241 (PHLGEASQNTNVVDNGEVEGGNSSQXQGAANNTVMP). Basic and acidic residues predominate over residues 171–180 (KVKEREKEVE). Composition is skewed to polar residues over residues 181–191 (QQNQWDQQNHE) and 226–240 (GNSSQXQGAANNTVM).

The protein localises to the nucleus. Probable transcription factor. The chain is Agamous-like MADS-box protein AGL8 homolog (SCM1) from Solanum commersonii (Commerson's wild potato).